The following is a 348-amino-acid chain: D-alanine--D-alanine ligase (348 aa).

The ATP-grasp domain occupies 132–334 (KRVLESADIP…YAELIEELVR (203 aa)). 162 to 217 (EAVLSYPVFVKPANMGSSVGISKAESEEELRAAILLALTYDSRILIEQGVLAREIE) is an ATP binding site. Mg(2+)-binding residues include aspartate 288, glutamate 301, and asparagine 303.

This sequence belongs to the D-alanine--D-alanine ligase family. Mg(2+) serves as cofactor. Requires Mn(2+) as cofactor.

The protein resides in the cytoplasm. The catalysed reaction is 2 D-alanine + ATP = D-alanyl-D-alanine + ADP + phosphate + H(+). The protein operates within cell wall biogenesis; peptidoglycan biosynthesis. Its function is as follows. Cell wall formation. The sequence is that of D-alanine--D-alanine ligase from Streptococcus equi subsp. zooepidemicus (strain MGCS10565).